The primary structure comprises 1131 residues: Plasma membrane ATPase (1131 aa).

The next 6 helical transmembrane spans lie at 77 to 97 (PVLV…EAAA), 98 to 118 (IISI…LLLI), 151 to 171 (GAIV…LIRL), 231 to 251 (AVVY…LISG), 265 to 285 (MSAI…AVQF), and 305 to 325 (MLVV…SVTL). Asp-357 acts as the 4-aspartylphosphate intermediate in catalysis. The Mg(2+) site is built by Asp-615 and Asp-619. 5 helical membrane passes run 642–662 (AADI…VIGA), 689–709 (LITV…MAVF), 733–753 (ITNI…STWA), 884–904 (LAFF…LGGF), and 946–966 (VIGC…WYVL). Residues 994 to 1010 (KRSLDRRSKDDIGDKEF) show a composition bias toward basic and acidic residues. 2 disordered regions span residues 994–1023 (KRSL…NYSN) and 1067–1131 (RRSM…TIRE). Residues 1089–1100 (SRTSNTLSTGSK) are compositionally biased toward polar residues. The segment covering 1118–1131 (IKPDKYDFASTIRE) has biased composition (basic and acidic residues).

This sequence belongs to the cation transport ATPase (P-type) (TC 3.A.3) family. Type IIIA subfamily.

Its subcellular location is the cell membrane. It catalyses the reaction ATP + H2O + H(+)(in) = ADP + phosphate + 2 H(+)(out). Functionally, the plasma membrane ATPase of plants and fungi is a hydrogen ion pump. The proton gradient it generates drives the active transport of nutrients by H(+)-symport. The resulting external acidification and/or internal alkinization may mediate growth responses. In Dunaliella bioculata (Green alga), this protein is Plasma membrane ATPase (PMA1).